Here is a 1149-residue protein sequence, read N- to C-terminus: FH2 domain-containing protein 1 (1149 aa).

Disordered regions lie at residues 18 to 79, 464 to 540, 554 to 660, and 681 to 1149; these read LATA…PPPG, NHDR…SRLS, ESAT…PLLP, and SPKS…PLQK. 2 stretches are compositionally biased toward pro residues: residues 33–48 and 56–79; these read ASPPPPPPPPPPPPCP and PSPPPPLPPPLPGGPPIPPPPPPG. The FH2 domain maps to 88–483; sequence GYSSLGKKKR…QLQRQKEMEQ (396 aa). The span at 464 to 485 shows a compositional bias: basic and acidic residues; that stretch reads NHDREEQERKQLQRQKEMEQKR. The span at 486–504 shows a compositional bias: polar residues; it reads YSWSTGELGSFGRSSSEND. Position 501 is a phosphoserine (Ser-501). Residues 522-532 are compositionally biased toward low complexity; sequence PRPNSPSYRPP. Composition is skewed to polar residues over residues 554-575 and 591-604; these read ESATSSPEDPNKFNSLPRSSPR and SHGPNFTHEPQASK. Phosphoserine is present on residues Ser-645 and Ser-655. Residues 681–693 show a composition bias toward polar residues; the sequence is SPKSLEEGSQLTL. Residues 784-795 are compositionally biased toward basic and acidic residues; it reads MDSRAGGDKQEE. Over residues 801 to 822 the composition is skewed to low complexity; it reads GSVSSGAGEAGSSQVSSNSVSS. Residues 844 to 856 are compositionally biased toward basic and acidic residues; it reads PKDRPSRGKDAIA. The segment covering 926-947 has biased composition (polar residues); the sequence is ETPSSTDTPLSRRSSVRGTSDT. Residues 960 to 1086 form an MTBD; microtubule-binding domain region; that stretch reads EEPRLPRSSG…VKGGSEDSAS (127 aa). Residues 965 to 974 are compositionally biased toward low complexity; the sequence is PRSSGSISGR. 2 stretches are compositionally biased toward polar residues: residues 1042–1052 and 1064–1074; these read ARNTVASSSRS and TGLTRTVSQRQ. The span at 1123-1134 shows a compositional bias: basic and acidic residues; sequence GTTERSSLRLKD.

As to quaternary structure, interacts with CEP170. Brain, heart and lung (at protein level).

It is found in the golgi apparatus. It localises to the cell projection. The protein localises to the cilium. Its function is as follows. Microtubule-associated formin which regulates both actin and microtubule dynamics. Induces microtubule acetylation and stabilization and actin stress fiber formation. Regulates Golgi ribbon formation. Required for normal cilia assembly. Early in cilia assembly, may assist in the maturation and positioning of the centrosome/basal body, and once cilia assembly has initiated, may also promote cilia elongation by inhibiting disassembly. In Mus musculus (Mouse), this protein is FH2 domain-containing protein 1 (Fhdc1).